The sequence spans 387 residues: 3-ketoacyl-CoA thiolase (387 aa).

Cys-91 functions as the Acyl-thioester intermediate in the catalytic mechanism. Active-site proton acceptor residues include His-343 and Cys-373.

This sequence belongs to the thiolase-like superfamily. Thiolase family. Heterotetramer of two alpha chains (FadB) and two beta chains (FadA).

It localises to the cytoplasm. It carries out the reaction an acyl-CoA + acetyl-CoA = a 3-oxoacyl-CoA + CoA. Its pathway is lipid metabolism; fatty acid beta-oxidation. Catalyzes the final step of fatty acid oxidation in which acetyl-CoA is released and the CoA ester of a fatty acid two carbons shorter is formed. The chain is 3-ketoacyl-CoA thiolase from Shewanella denitrificans (strain OS217 / ATCC BAA-1090 / DSM 15013).